A 172-amino-acid chain; its full sequence is Cytidylate kinase (172 aa).

7 to 15 lines the ATP pocket; sequence GPPGSGTST.

The protein belongs to the cytidylate kinase family. Type 2 subfamily.

The protein resides in the cytoplasm. It catalyses the reaction CMP + ATP = CDP + ADP. The enzyme catalyses dCMP + ATP = dCDP + ADP. This Methanothrix thermoacetophila (strain DSM 6194 / JCM 14653 / NBRC 101360 / PT) (Methanosaeta thermophila) protein is Cytidylate kinase.